Consider the following 601-residue polypeptide: Protein FAM13C (601 aa).

Disordered stretches follow at residues 82–134 (SMGN…PQSS) and 192–238 (DGQV…EDLQ). The span at 98-111 (ESGRNHGESQETEH) shows a compositional bias: basic and acidic residues. Position 130 is a phosphoserine (serine 130). Residues 200–217 (DPAPASTQSAPADSADPA) show a composition bias toward low complexity. Position 258 is a phosphoserine (serine 258). 3 disordered regions span residues 268 to 304 (QRFNLDPESAPSPPSSQQFMMPRSSSRCGSGDGKEPQ), 327 to 352 (FEQEKKYRPSHGDKTSNPEVLKWMND), and 366 to 485 (KLSE…DPVS). The span at 282-294 (SSQQFMMPRSSSR) shows a compositional bias: low complexity. A compositionally biased stretch (basic and acidic residues) spans 327–342 (FEQEKKYRPSHGDKTS). Residues serine 405 and serine 406 each carry the phosphoserine modification. A compositionally biased stretch (basic and acidic residues) spans 415 to 446 (VPEKREQTPPQDDGKGTKQDKNLIKPLYDRCR). The span at 462–471 (QEEEDSDEDC) shows a compositional bias: acidic residues.

The protein belongs to the FAM13 family.

The sequence is that of Protein FAM13C (Fam13c) from Mus musculus (Mouse).